Here is a 185-residue protein sequence, read N- to C-terminus: Cytidylate kinase (185 aa).

8-16 (GPPGSGKTT) contacts ATP.

The protein belongs to the cytidylate kinase family. Type 2 subfamily.

It localises to the cytoplasm. It catalyses the reaction CMP + ATP = CDP + ADP. It carries out the reaction dCMP + ATP = dCDP + ADP. The protein is Cytidylate kinase of Desulfurococcus amylolyticus (strain DSM 18924 / JCM 16383 / VKM B-2413 / 1221n) (Desulfurococcus kamchatkensis).